A 311-amino-acid polypeptide reads, in one-letter code: Pyrimidine-specific ribonucleoside hydrolase RihA (311 aa).

The active site involves His240.

This sequence belongs to the IUNH family. RihA subfamily.

In terms of biological role, hydrolyzes cytidine or uridine to ribose and cytosine or uracil, respectively. The protein is Pyrimidine-specific ribonucleoside hydrolase RihA of Salmonella paratyphi B (strain ATCC BAA-1250 / SPB7).